The chain runs to 280 residues: Golgi to ER traffic protein 2 (280 aa).

Topologically, residues 1 to 149 are cytoplasmic; it reads MPSDREKQRI…IAYNLYQQRK (149 aa). Residues 15–59 form a disordered region; it reads RQAKMAKGGASDRLNKILSQGSSVKTSAVSVLDQPQPADHDPEGM. Over residues 31–43 the composition is skewed to polar residues; it reads ILSQGSSVKTSAV. The chain crosses the membrane as a helical span at residues 150 to 170; that stretch reads VRHRFLVVRMVSILANFVYHF. Residues 171 to 197 lie on the Lumenal side of the membrane; sequence LTISDFSFSPSANPFIRSIPPTSSVSS. A helical transmembrane segment spans residues 198-217; the sequence is FFQIFVAIEAVLVAAYIAAS. Over 218-257 the chain is Cytoplasmic; that stretch reads RNVPSNNNGLLVKGISMAAMFVPKLQRFQPLIMKIIGCWD. A helical transmembrane segment spans residues 258–278; the sequence is TVTFVLNDLGLVVLLFGLISF. Topologically, residues 279–280 are lumenal; it reads RR.

It belongs to the GET2 family. As to quaternary structure, component of the Golgi to ER traffic (GET) complex, which is composed of GET1, GET2 and GET3. Within the complex, GET1 and GET2 form a heterotetramer which is stabilized by phosphatidylinositol binding and which binds to the GET3 homodimer.

It is found in the endoplasmic reticulum membrane. The protein resides in the golgi apparatus membrane. Its function is as follows. Required for the post-translational delivery of tail-anchored (TA) proteins to the endoplasmic reticulum. Together with GET1, acts as a membrane receptor for soluble GET3, which recognizes and selectively binds the transmembrane domain of TA proteins in the cytosol. The GET complex cooperates with the HDEL receptor ERD2 to mediate the ATP-dependent retrieval of resident ER proteins that contain a C-terminal H-D-E-L retention signal from the Golgi to the ER. This is Golgi to ER traffic protein 2 from Meyerozyma guilliermondii (strain ATCC 6260 / CBS 566 / DSM 6381 / JCM 1539 / NBRC 10279 / NRRL Y-324) (Yeast).